A 510-amino-acid chain; its full sequence is 2-isopropylmalate synthase (510 aa).

The Pyruvate carboxyltransferase domain occupies 5–267; the sequence is LVIFDTTLRD…DTRIDTTQIV (263 aa). Residues Asp-14, His-202, His-204, and Asn-238 each contribute to the Mn(2+) site. The segment at 392-510 is regulatory domain; the sequence is RLLSLHAVSE…SSLERTHPQI (119 aa).

The protein belongs to the alpha-IPM synthase/homocitrate synthase family. LeuA type 1 subfamily. As to quaternary structure, homodimer. Requires Mn(2+) as cofactor.

The protein localises to the cytoplasm. The catalysed reaction is 3-methyl-2-oxobutanoate + acetyl-CoA + H2O = (2S)-2-isopropylmalate + CoA + H(+). The protein operates within amino-acid biosynthesis; L-leucine biosynthesis; L-leucine from 3-methyl-2-oxobutanoate: step 1/4. Functionally, catalyzes the condensation of the acetyl group of acetyl-CoA with 3-methyl-2-oxobutanoate (2-ketoisovalerate) to form 3-carboxy-3-hydroxy-4-methylpentanoate (2-isopropylmalate). In Nitrosomonas europaea (strain ATCC 19718 / CIP 103999 / KCTC 2705 / NBRC 14298), this protein is 2-isopropylmalate synthase.